We begin with the raw amino-acid sequence, 1765 residues long: Sodium channel protein type 11 subunit alpha (1765 aa).

Residues 1 to 126 lie on the Cytoplasmic side of the membrane; the sequence is MEERYYPVIF…PLRSLMIRIS (126 aa). One copy of the I repeat lies at 115 to 403; that stretch reads FNPLRSLMIR…VTMAYEEQNR (289 aa). The helical transmembrane segment at 127 to 148 threads the bilayer; the sequence is VHSVFSMFIICTVIINCMFMAN. The Extracellular portion of the chain corresponds to 149–157; the sequence is SMERSFDND. Residues 158–177 traverse the membrane as a helical segment; it reads IPEYVFIGIYILEAVIKILA. Residues 178-189 lie on the Cytoplasmic side of the membrane; sequence RGFIVDEFSFLR. The helical transmembrane segment at 190-209 threads the bilayer; the sequence is DPWNWLDFIVIGTAIATCFP. The Extracellular segment spans residues 210 to 216; the sequence is GSQVNLS. An N-linked (GlcNAc...) asparagine glycan is attached at Asn-214. Residues 217–236 traverse the membrane as a helical; Voltage-sensor segment; that stretch reads ALRTFRVFRALKAISVISGL. Topologically, residues 237–252 are cytoplasmic; the sequence is KVIVGALLRSVKKLVD. A helical transmembrane segment spans residues 253-266; it reads VMVLTLFCLSIFAL. At 267 to 339 the chain is on the extracellular side; that stretch reads VGQQLFMGIL…PDNNYTKFDN (73 aa). Cys-280 and Cys-317 are joined by a disulfide. Asn-319 and Asn-333 each carry an N-linked (GlcNAc...) asparagine glycan. Positions 340-364 form an intramembrane region, pore-forming; it reads FGWSFLAMFRVMTQDSWERLYRQIL. Over 365 to 371 the chain is Extracellular; the sequence is RTSGIYF. The chain crosses the membrane as a helical span at residues 372–397; it reads VFFFVVVIFLGSFYLLNLTLAVVTMA. The Cytoplasmic segment spans residues 398 to 567; that stretch reads YEEQNRNVAA…WLCIKKVLRT (170 aa). The stretch at 554–820 is one II repeat; it reads CSPQWLCIKK…EGETRKTKVQ (267 aa). The helical transmembrane segment at 568 to 591 threads the bilayer; sequence IMTDPFTELAITICIIINTVFLAV. The Extracellular portion of the chain corresponds to 592–602; sequence EHHNMDDNLKT. Residues 603-626 form a helical membrane-spanning segment; the sequence is ILKIGNWVFTGIFIAEMCLKIIAL. At 627 to 634 the chain is on the cytoplasmic side; the sequence is DPYHYFRH. A helical membrane pass occupies residues 635 to 656; it reads GWNVFDSIVALLSLADVLYNTL. Residues 657–662 are Extracellular-facing; that stretch reads SDNNRS. An N-linked (GlcNAc...) asparagine glycan is attached at Asn-660. The helical; Voltage-sensor transmembrane segment at 663–682 threads the bilayer; the sequence is FLASLRVLRVFKLAKSWPTL. The Cytoplasmic segment spans residues 683-697; it reads NTLIKIIGHSVGALG. Residues 698-720 form a helical membrane-spanning segment; the sequence is NLTVVLTIVVFIFSVVGMRLFGT. The Extracellular segment spans residues 721–741; that stretch reads KFNKTAYATQERPRRRWHMDN. Residue Asn-723 is glycosylated (N-linked (GlcNAc...) asparagine). The segment at residues 742 to 762 is an intramembrane region (pore-forming); that stretch reads FYHSFLVVFRILCGEWIENMW. Residues 763-772 are Extracellular-facing; the sequence is GCMQDMDGSP. Residues Cys-764 and Cys-774 are joined by a disulfide bond. The chain crosses the membrane as a helical span at residues 773-798; the sequence is LCIIVFVLIMVIGKLVVLNLFIALLL. Over 799–1029 the chain is Cytoplasmic; sequence NSFSNEEKDG…WWNIRKTCYQ (231 aa). An III repeat occupies 1022–1319; sequence NIRKTCYQIV…KKYYNAMKKL (298 aa). The chain crosses the membrane as a helical span at residues 1030–1052; that stretch reads IVKHSWFESFIIFVILLSSGALI. At 1053–1066 the chain is on the extracellular side; that stretch reads FEDVNLPSRPQVEK. The helical transmembrane segment at 1067–1092 threads the bilayer; it reads LLRCTDNIFTFIFLLEMILKWVAFGF. Residues 1093-1098 lie on the Cytoplasmic side of the membrane; sequence RRYFTS. The chain crosses the membrane as a helical span at residues 1099–1116; sequence AWCWLDFLIVVVSVLSLM. A topological domain (extracellular) is located at residue Asn-1117. The chain crosses the membrane as a helical; Voltage-sensor span at residues 1118–1139; sequence LPSLKSFRTLRALRPLRALSQF. Topologically, residues 1140–1158 are cytoplasmic; the sequence is EGMKVVVYALISAIPAILN. A helical membrane pass occupies residues 1159 to 1180; that stretch reads VLLVCLIFWLVFCILGVNLFSG. Residues 1181 to 1223 lie on the Extracellular side of the membrane; sequence KFGRCINGTDINMYLDFTEVPNRSQCNISNYSWKVPQVNFDNV. Residues Asn-1187, Asn-1202, Asn-1207, and Asn-1210 are each glycosylated (N-linked (GlcNAc...) asparagine). Positions 1224-1245 form an intramembrane region, pore-forming; the sequence is GNAYLALLQVATYKGWLEIMNA. Residues 1246–1261 lie on the Extracellular side of the membrane; sequence AVDSREKDEQPDFEAN. A helical transmembrane segment spans residues 1262 to 1288; the sequence is LYAYLYFVVFIIFGSFFTLNLFIGVII. At 1289-1341 the chain is on the cytoplasmic side; the sequence is DNFNQQQKKLGGQDIFMTEEQKKYYNAMKKLGTKKPQKPIPRPLNKCQAFVFD. The stretch at 1328–1619 is one IV repeat; that stretch reads IPRPLNKCQA…WEKFDPEASQ (292 aa). The chain crosses the membrane as a helical span at residues 1342-1365; that stretch reads LVTSQVFDVIILGLIVLNMIIMMA. At 1366-1376 the chain is on the extracellular side; the sequence is ESADQPKDVKK. The helical transmembrane segment at 1377–1400 threads the bilayer; sequence TFDILNIAFVVIFTIECLIKVFAL. Residues 1401 to 1406 lie on the Cytoplasmic side of the membrane; that stretch reads RQHYFT. A helical transmembrane segment spans residues 1407-1430; the sequence is NGWNLFDCVVVVLSIISTLVSRLE. Over 1431 to 1440 the chain is Extracellular; the sequence is DSDISFPPTL. Residues 1441-1463 form a helical; Voltage-sensor membrane-spanning segment; sequence FRVVRLARIGRILRLVRAARGIR. Residues 1464–1478 are Cytoplasmic-facing; the sequence is TLLFALMMSLPSLFN. The chain crosses the membrane as a helical span at residues 1479–1501; the sequence is IGLLLFLVMFIYAIFGMSWFSKV. Topologically, residues 1502–1515 are extracellular; sequence KKGSGIDDIFNFET. The segment at residues 1516–1538 is an intramembrane region (pore-forming); sequence FTGSMLCLFQITTSAGWDTLLNP. Topologically, residues 1539–1559 are extracellular; sequence MLEAKEHCNSSSQDSCQQPQI. Asn-1547 is a glycosylation site (N-linked (GlcNAc...) asparagine). A helical membrane pass occupies residues 1560 to 1584; that stretch reads AVVYFVSYIIISFLIVVNMYIAVIL. Over 1585–1765 the chain is Cytoplasmic; that stretch reads ENFNTATEES…DVAKVKVHND (181 aa).

The protein belongs to the sodium channel (TC 1.A.1.10) family. Nav1.9/SCN11A subfamily. As to quaternary structure, the voltage-resistant sodium channel consists of an ion conducting pore forming alpha-subunit regulated by one or more auxiliary subunits SCN1B, SCN2B and SCN3B. As to expression, expressed (at protein level) in myenteric sensory neurons. Expressed in small sensory neurons of the dorsal root ganglia (C-fiber neurons) and trigeminal ganglia.

It is found in the cell membrane. It carries out the reaction Na(+)(in) = Na(+)(out). With respect to regulation, activity is not sensitive to inhibition by tetrodotoxin. Functionally, sodium channel mediating the voltage-dependent sodium ion permeability of excitable membranes. Assuming opened or closed conformations in response to the voltage difference across the membrane, the protein forms a sodium-selective channel through which sodium ions may pass in accordance with their electrochemical gradient. Involved in membrane depolarization during action potential in nociceptors which function as key relay stations for the electrical transmission of pain signals from the periphery to the central nervous system. Also involved in rapid BDNF-evoked neuronal depolarization. The polypeptide is Sodium channel protein type 11 subunit alpha (Rattus norvegicus (Rat)).